Reading from the N-terminus, the 67-residue chain is ATP synthase protein 8 (67 aa).

A helical transmembrane segment spans residues 8-24 (TWFITILSMLMTLFILF). Lys-54 is subject to N6-acetyllysine; alternate. Lys-54 carries the post-translational modification N6-succinyllysine; alternate. An N6-acetyllysine modification is found at Lys-57.

It belongs to the ATPase protein 8 family. In terms of assembly, F-type ATPases have 2 components, CF(1) - the catalytic core - and CF(0) - the membrane proton channel. Component of an ATP synthase complex composed of ATP5PB, ATP5MC1, ATP5F1E, ATP5PD, ATP5ME, ATP5PF, ATP5MF, MT-ATP6, MT-ATP8, ATP5F1A, ATP5F1B, ATP5F1D, ATP5F1C, ATP5PO, ATP5MG, ATP5MK and ATP5MJ. Interacts with PRICKLE3.

The protein resides in the mitochondrion membrane. Functionally, mitochondrial membrane ATP synthase (F(1)F(0) ATP synthase or Complex V) produces ATP from ADP in the presence of a proton gradient across the membrane which is generated by electron transport complexes of the respiratory chain. F-type ATPases consist of two structural domains, F(1) - containing the extramembraneous catalytic core and F(0) - containing the membrane proton channel, linked together by a central stalk and a peripheral stalk. During catalysis, ATP synthesis in the catalytic domain of F(1) is coupled via a rotary mechanism of the central stalk subunits to proton translocation. Part of the complex F(0) domain. Minor subunit located with subunit a in the membrane. This is ATP synthase protein 8 (MT-ATP8) from Vicugna pacos (Alpaca).